The following is a 641-amino-acid chain: 1-deoxy-D-xylulose-5-phosphate synthase (641 aa).

Thiamine diphosphate-binding positions include His79 and 120–122 (AHS). A Mg(2+)-binding site is contributed by Asp151. Residues 152–153 (GA), Asn180, Tyr290, and Glu372 each bind thiamine diphosphate. Residue Asn180 coordinates Mg(2+).

This sequence belongs to the transketolase family. DXPS subfamily. Homodimer. Requires Mg(2+) as cofactor. Thiamine diphosphate is required as a cofactor.

It carries out the reaction D-glyceraldehyde 3-phosphate + pyruvate + H(+) = 1-deoxy-D-xylulose 5-phosphate + CO2. The protein operates within metabolic intermediate biosynthesis; 1-deoxy-D-xylulose 5-phosphate biosynthesis; 1-deoxy-D-xylulose 5-phosphate from D-glyceraldehyde 3-phosphate and pyruvate: step 1/1. Its function is as follows. Catalyzes the acyloin condensation reaction between C atoms 2 and 3 of pyruvate and glyceraldehyde 3-phosphate to yield 1-deoxy-D-xylulose-5-phosphate (DXP). This Bradyrhizobium sp. (strain BTAi1 / ATCC BAA-1182) protein is 1-deoxy-D-xylulose-5-phosphate synthase.